Reading from the N-terminus, the 324-residue chain is Probable fructokinase-5 (324 aa).

The protein belongs to the carbohydrate kinase PfkB family.

The catalysed reaction is D-fructose + ATP = D-fructose 6-phosphate + ADP + H(+). The protein operates within glycan biosynthesis; starch biosynthesis. In terms of biological role, may play an important role in maintaining the flux of carbon towards starch formation. This Arabidopsis thaliana (Mouse-ear cress) protein is Probable fructokinase-5.